Consider the following 200-residue polypeptide: NADH-quinone oxidoreductase subunit B (200 aa).

The [4Fe-4S] cluster site is built by Cys-78, Cys-79, Cys-144, and Cys-174.

This sequence belongs to the complex I 20 kDa subunit family. In terms of assembly, NDH-1 is composed of 14 different subunits. Subunits NuoB, C, D, E, F, and G constitute the peripheral sector of the complex. It depends on [4Fe-4S] cluster as a cofactor.

Its subcellular location is the cell membrane. The catalysed reaction is a quinone + NADH + 5 H(+)(in) = a quinol + NAD(+) + 4 H(+)(out). In terms of biological role, NDH-1 shuttles electrons from NADH, via FMN and iron-sulfur (Fe-S) centers, to quinones in the respiratory chain. The immediate electron acceptor for the enzyme in this species is believed to be ubiquinone. Couples the redox reaction to proton translocation (for every two electrons transferred, four hydrogen ions are translocated across the cytoplasmic membrane), and thus conserves the redox energy in a proton gradient. In Dehalococcoides mccartyi (strain ATCC BAA-2100 / JCM 16839 / KCTC 5957 / BAV1), this protein is NADH-quinone oxidoreductase subunit B.